The chain runs to 364 residues: Chaperone protein DnaJ (364 aa).

The region spanning Asp-4–Gly-69 is the J domain. The segment at Gly-135–Gln-213 adopts a CR-type zinc-finger fold. Zn(2+)-binding residues include Cys-148, Cys-151, Cys-165, Cys-168, Cys-187, Cys-190, Cys-201, and Cys-204. CXXCXGXG motif repeat units lie at residues Cys-148–Lys-155, Cys-165–Gly-172, Cys-187–Gly-194, and Cys-201–Gly-208.

It belongs to the DnaJ family. Homodimer. Requires Zn(2+) as cofactor.

The protein localises to the cytoplasm. Functionally, participates actively in the response to hyperosmotic and heat shock by preventing the aggregation of stress-denatured proteins and by disaggregating proteins, also in an autonomous, DnaK-independent fashion. Unfolded proteins bind initially to DnaJ; upon interaction with the DnaJ-bound protein, DnaK hydrolyzes its bound ATP, resulting in the formation of a stable complex. GrpE releases ADP from DnaK; ATP binding to DnaK triggers the release of the substrate protein, thus completing the reaction cycle. Several rounds of ATP-dependent interactions between DnaJ, DnaK and GrpE are required for fully efficient folding. Also involved, together with DnaK and GrpE, in the DNA replication of plasmids through activation of initiation proteins. The protein is Chaperone protein DnaJ of Borreliella burgdorferi (strain ATCC 35210 / DSM 4680 / CIP 102532 / B31) (Borrelia burgdorferi).